A 264-amino-acid polypeptide reads, in one-letter code: uncharacterized protein (264 aa).

A run of 6 helical transmembrane segments spans residues 23 to 43 (LIFL…TALI), 59 to 79 (FDTF…YYFL), 91 to 111 (LVLS…FYAL), 150 to 170 (FSEL…VGLL), 190 to 210 (AGIY…LNVW), and 233 to 253 (WIWS…LFVI).

The protein resides in the cell membrane. This is an uncharacterized protein from Mycoplasma genitalium (strain ATCC 33530 / DSM 19775 / NCTC 10195 / G37) (Mycoplasmoides genitalium).